The primary structure comprises 313 residues: HPr kinase/phosphorylase (313 aa).

Catalysis depends on residues His136 and Lys157. 151 to 158 contributes to the ATP binding site; it reads GDSGIGKS. Residue Ser158 coordinates Mg(2+). Residue Asp175 is the Proton acceptor; for phosphorylation activity. Proton donor; for dephosphorylation activity of the active site. The important for the catalytic mechanism of both phosphorylation and dephosphorylation stretch occupies residues 199–208; the sequence is LEIRGLGIIN. Glu200 contacts Mg(2+). Arg241 is an active-site residue. The interval 262 to 267 is important for the catalytic mechanism of dephosphorylation; sequence PVRPGR.

The protein belongs to the HPrK/P family. Homohexamer. The cofactor is Mg(2+).

It carries out the reaction [HPr protein]-L-serine + ATP = [HPr protein]-O-phospho-L-serine + ADP + H(+). The enzyme catalyses [HPr protein]-O-phospho-L-serine + phosphate + H(+) = [HPr protein]-L-serine + diphosphate. Catalyzes the ATP- as well as the pyrophosphate-dependent phosphorylation of a specific serine residue in HPr, a phosphocarrier protein of the phosphoenolpyruvate-dependent sugar phosphotransferase system (PTS). HprK/P also catalyzes the pyrophosphate-producing, inorganic phosphate-dependent dephosphorylation (phosphorolysis) of seryl-phosphorylated HPr (P-Ser-HPr). The two antagonistic activities of HprK/P are regulated by several intracellular metabolites, which change their concentration in response to the absence or presence of rapidly metabolisable carbon sources (glucose, fructose, etc.) in the growth medium. Therefore, by controlling the phosphorylation state of HPr, HPrK/P is a sensor enzyme that plays a major role in the regulation of carbon metabolism and sugar transport: it mediates carbon catabolite repression (CCR), and regulates PTS-catalyzed carbohydrate uptake and inducer exclusion. The chain is HPr kinase/phosphorylase from Staphylococcus saprophyticus subsp. saprophyticus (strain ATCC 15305 / DSM 20229 / NCIMB 8711 / NCTC 7292 / S-41).